We begin with the raw amino-acid sequence, 361 residues long: Probable purine permease 5 (361 aa).

A run of 9 helical transmembrane segments spans residues 37–57 (WILL…SSLL), 70–90 (WIIS…LLPT), 105–125 (LVLS…MYAY), 134–154 (TSSL…YLIV), 158–178 (LNAS…IIAL), 193–213 (YFAG…IFAL), 235–255 (VMVS…SNDF), 285–305 (LGVL…AGVL), and 315–335 (VAAV…SLVL). The 104-residue stretch at 75–178 (VAVAGWPITC…ITGAMAIIAL (104 aa)) folds into the EamA domain.

The protein belongs to the purine permeases (TC 2.A.7.14) family.

The protein resides in the membrane. In Arabidopsis thaliana (Mouse-ear cress), this protein is Probable purine permease 5 (PUP5).